A 149-amino-acid polypeptide reads, in one-letter code: DnaJ homolog subfamily C member 24 (149 aa).

The J domain maps to 11–82; sequence DWYSILGADP…ETKKEYDLQR (72 aa). The 56-residue stretch at 93-148 folds into the DPH-type MB domain; sequence VDARIYLEEMSWNEDDHSFSLSCRCGGKYSVSKDEAEEVTLISCDTCSLIIELLHY. Zn(2+) contacts are provided by cysteine 115, cysteine 117, cysteine 136, and cysteine 139.

This sequence belongs to the DPH4 family. Monomer and homooligomer. Iron binding promotes oligomerization.

It localises to the cytoplasm. It is found in the cytoskeleton. The protein operates within protein modification; peptidyl-diphthamide biosynthesis. In terms of biological role, stimulates the ATPase activity of several Hsp70-type chaperones. This ability is enhanced by iron-binding. The iron-bound form is redox-active and can function as electron carrier. Plays a role in the diphthamide biosynthesis, a post-translational modification of histidine which occurs in translation elongation factor 2 (EEF2). The chain is DnaJ homolog subfamily C member 24 (DNAJC24) from Bos taurus (Bovine).